Reading from the N-terminus, the 190-residue chain is Peptidyl-tRNA hydrolase (190 aa).

Tyrosine 18 provides a ligand contact to tRNA. Histidine 23 serves as the catalytic Proton acceptor. Residues tyrosine 69, asparagine 71, and asparagine 117 each contribute to the tRNA site.

The protein belongs to the PTH family. Monomer.

It localises to the cytoplasm. It carries out the reaction an N-acyl-L-alpha-aminoacyl-tRNA + H2O = an N-acyl-L-amino acid + a tRNA + H(+). Hydrolyzes ribosome-free peptidyl-tRNAs (with 1 or more amino acids incorporated), which drop off the ribosome during protein synthesis, or as a result of ribosome stalling. Its function is as follows. Catalyzes the release of premature peptidyl moieties from peptidyl-tRNA molecules trapped in stalled 50S ribosomal subunits, and thus maintains levels of free tRNAs and 50S ribosomes. The polypeptide is Peptidyl-tRNA hydrolase (Rhodococcus erythropolis (strain PR4 / NBRC 100887)).